Reading from the N-terminus, the 1423-residue chain is Autophagy-related protein 11 (1423 aa).

Coiled-coil stretches lie at residues 551–589 and 625–978; these read DDEL…QSQA and SEGT…ASEL. 2 disordered regions span residues 583 to 660 and 1028 to 1048; these read LHRQ…SNRA and RAER…SLRK. A compositionally biased stretch (polar residues) spans 585–602; the sequence is RQSQASRPGNLFQPQTNS. A compositionally biased stretch (basic and acidic residues) spans 631-648; sequence LLRRISELENELREEKQR. Polar residues-rich tracts occupy residues 650–660 and 1034–1047; these read SRIQNDLSNRA and QNPN…TSLR. The stretch at 1102–1130 forms a coiled coil; the sequence is HRIKEVEHKARKWQKEARSYRDRAHIAQK. Residues 1327-1423 are disordered; it reads SLRAAAPETP…DYTYESPGKK (97 aa). A compositionally biased stretch (basic and acidic residues) spans 1383–1395; sequence KTAEPRRMLDRQE.

This sequence belongs to the ATG11 family. As to quaternary structure, homodimer and potential homooligomers. Interacts with ATG1 kinase and the ATG19 and ATG34 cargo protein transporters. Interacts with ATG9, ATG17 and ATG20.

The protein localises to the preautophagosomal structure membrane. It is found in the vacuole membrane. Functionally, involved in cytoplasm to vacuole transport (Cvt), pexophagy, mitophagy and nucleophagy. Recruits mitochondria for their selective degradation via autophagy (mitophagy) during starvation, through its interaction with ATG32. Works as scaffold proteins that recruit ATG proteins to the pre-autophagosome (PAS), the site of vesicle/autophagosome formation. Required for ATG9 anterograde transport from the mitochondria to the PAS. Also recruits the ATG19-prAPE1 complex to the PAS. Required for the Cvt vesicles completion. Plays a role in morphological differentiation and cephalosporin production. The polypeptide is Autophagy-related protein 11 (Hapsidospora chrysogena (Acremonium chrysogenum)).